We begin with the raw amino-acid sequence, 431 residues long: Glutamate-1-semialdehyde 2,1-aminomutase (431 aa).

Lys267 is modified (N6-(pyridoxal phosphate)lysine).

This sequence belongs to the class-III pyridoxal-phosphate-dependent aminotransferase family. HemL subfamily. In terms of assembly, homodimer. The cofactor is pyridoxal 5'-phosphate.

The protein localises to the cytoplasm. It carries out the reaction (S)-4-amino-5-oxopentanoate = 5-aminolevulinate. It functions in the pathway porphyrin-containing compound metabolism; protoporphyrin-IX biosynthesis; 5-aminolevulinate from L-glutamyl-tRNA(Glu): step 2/2. This chain is Glutamate-1-semialdehyde 2,1-aminomutase, found in Myxococcus xanthus (strain DK1622).